Consider the following 1073-residue polypeptide: Envelopment polyprotein (1073 aa).

The first 19 residues, 1 to 19, serve as a signal peptide directing secretion; it reads MMKVIWFSSLICFVIQCSG. Over 20–453 the chain is Lumenal; it reads DSGPIICAGP…NPQCYPAKKW (434 aa). A disulfide bridge links C26 with C49. N-linked (GlcNAc...) asparagine; by host glycosylation is found at N33 and N63. 10 cysteine pairs are disulfide-bonded: C143-C156, C180-C327, C206-C216, C258-C305, C266-C303, C274-C280, C287-C292, C349-C352, C356-C424, and C376-C381. A helical transmembrane segment spans residues 454 to 474; sequence LFIIIVILLGYAGLMLLTNVL. The interval 475–521 is golgi retention signal; it reads KAIGIWGSWVIAPVKLMFAIIKKLMRTVSCLMRKLMDRGRQVIHEEI. The Cytoplasmic portion of the chain corresponds to 475–535; sequence KAIGIWGSWV…EGNQDDVRIE (61 aa). Residues 536–562 are internal signal sequence for glycoprotein C; it reads MARPRRVRHWMYSPVILTILAIGLAES. 10 cysteine pairs are disulfide-bonded: C563–C604, C576–C586, C629–C725, C644–C841, C650–C698, C656–C705, C660–C687, C691–C696, C778–C793, and C809–C823. Topologically, residues 563 to 1036 are lumenal; that stretch reads CDEMVHADSK…ALFGNGLSRW (474 aa). Residues 650-656 form a fusion loop region; sequence CRWAGDC. Residues 691-705 form a fusion loop region; it reads CGGAACGCFNAAPSC. N-linked (GlcNAc...) asparagine; by host glycans are attached at residues N853 and N914. Intrachain disulfides connect C908–C978, C918–C921, and C943–C974. N936 carries N-linked (GlcNAc...) asparagine; by host glycosylation. A helical membrane pass occupies residues 1037-1057; that stretch reads ILGVIGVLLGGLALFFMIMSL. Topologically, residues 1058–1073 are cytoplasmic; it reads FKLGTKQVFRSRTKLA.

This sequence belongs to the phlebovirus envelope glycoprotein family. Homodimer. Heterodimer with glycoprotein C. Homotrimer (postfusion). As to quaternary structure, heterodimer with glycoprotein N. Post-translationally, specific enzymatic cleavages in vivo yield mature proteins including glycoprotein C and glycoprotein N. In terms of processing, the cytoplasmic tail is Palmitoylated. Glycosylated. Post-translationally, palmitoylated.

The protein resides in the virion membrane. It is found in the host Golgi apparatus membrane. It localises to the host endoplasmic reticulum membrane. In terms of biological role, structural component of the virion that interacts with glycoprotein C. It shields the hydrophobic fusion loops of the glycoprotein C, preventing premature fusion. The glycoprotein protrusions are arranged on an icosahedral lattice, with T=12 triangulation. They are able to attach the virion to the host cell receptor CD209/DC-SIGN and to promote fusion of membranes with the late endosome after clathrin-mediated endocytosis of the virion. Plays a role in the packaging of ribonucleoproteins during virus assembly. Structural component of the virion that interacts with glycoprotein N. Acts as a class II fusion protein that is activated upon acidification and subsequent repositioning of the glycoprotein N. The glycoprotein protrusions are arranged on an icosahedral lattice, with T=12 triangulation. They are able to attach the virion to the host cell receptor CD209/DC-SIGN and to promote fusion of membranes with the late endosome after clathrin-mediated endocytosis of the virion. The sequence is that of Envelopment polyprotein from Dabie bandavirus (Severe fever with thrombocytopenia virus).